The following is a 191-amino-acid chain: UPF0302 protein SA1295 (191 aa).

Belongs to the UPF0302 family.

This is UPF0302 protein SA1295 from Staphylococcus aureus (strain N315).